Consider the following 361-residue polypeptide: MSTTITNSTAERKHSHVDICLNGDVAFSTPTTGFERYRLRHNALPEVSFADITTESRFLGRRIGAPLMISSMTGGYSEAAELNRQLAETAERFQLPLGVGSMRQALEDDAYRDSFSVVRRHAPTIQIFANIGAPEVAKGLSDKDLHIMLEMIRADGLIIHLNAAQELFQPEGGTDFRRVLDNIADIAAKLPVPVIAKEVGCGISGAVARKLLEAGVQVIDVAGAGGISWQKVEEARYTRRFGSDTRFSQEGIEELLNWGIPTAACVVEVDALRPRTAGGRPFSIIASGGIHSGLDIAKSIALGADLAASAGALLRALHHGTLEATITAWLQDLRASMFLTGSANVAELQNNRPIGDTAKQP.

12 to 13 (RK) lines the substrate pocket. Residues serine 70, 71–73 (SMT), serine 101, and asparagine 130 contribute to the FMN site. 101–103 (SMR) is a substrate binding site. Glutamine 165 serves as a coordination point for substrate. Residue glutamate 166 participates in Mg(2+) binding. Residues lysine 197 and 310–311 (AG) contribute to the FMN site.

It belongs to the IPP isomerase type 2 family. In terms of assembly, homooctamer. Dimer of tetramers. FMN is required as a cofactor. Requires NADPH as cofactor. Mg(2+) serves as cofactor.

The protein localises to the cytoplasm. The catalysed reaction is isopentenyl diphosphate = dimethylallyl diphosphate. Its function is as follows. Involved in the biosynthesis of isoprenoids. Catalyzes the 1,3-allylic rearrangement of the homoallylic substrate isopentenyl (IPP) to its allylic isomer, dimethylallyl diphosphate (DMAPP). The protein is Isopentenyl-diphosphate delta-isomerase of Chlorobium luteolum (strain DSM 273 / BCRC 81028 / 2530) (Pelodictyon luteolum).